The following is a 467-amino-acid chain: Methylenetetrahydrofolate--tRNA-(uracil-5-)-methyltransferase TrmFO (467 aa).

FAD is bound at residue 11-16; it reads GAGLAG.

This sequence belongs to the MnmG family. TrmFO subfamily. FAD serves as cofactor.

The protein resides in the cytoplasm. The catalysed reaction is uridine(54) in tRNA + (6R)-5,10-methylene-5,6,7,8-tetrahydrofolate + NADH + H(+) = 5-methyluridine(54) in tRNA + (6S)-5,6,7,8-tetrahydrofolate + NAD(+). It carries out the reaction uridine(54) in tRNA + (6R)-5,10-methylene-5,6,7,8-tetrahydrofolate + NADPH + H(+) = 5-methyluridine(54) in tRNA + (6S)-5,6,7,8-tetrahydrofolate + NADP(+). Functionally, catalyzes the folate-dependent formation of 5-methyl-uridine at position 54 (M-5-U54) in all tRNAs. The polypeptide is Methylenetetrahydrofolate--tRNA-(uracil-5-)-methyltransferase TrmFO (Prochlorococcus marinus (strain NATL2A)).